A 123-amino-acid chain; its full sequence is UPF0102 protein Pcar_2217 (123 aa).

It belongs to the UPF0102 family.

This Syntrophotalea carbinolica (strain DSM 2380 / NBRC 103641 / GraBd1) (Pelobacter carbinolicus) protein is UPF0102 protein Pcar_2217.